A 450-amino-acid polypeptide reads, in one-letter code: tRNA modification GTPase MnmE (450 aa).

Positions 23, 80, and 123 each coordinate (6S)-5-formyl-5,6,7,8-tetrahydrofolate. The TrmE-type G domain maps to 219-372 (GLHVVLAGQP…LRARLLQMAG (154 aa)). Residue asparagine 229 coordinates K(+). Residues 229 to 234 (NVGKSS), 248 to 254 (TPIAGTT), and 273 to 276 (DTAG) each bind GTP. Residue serine 233 coordinates Mg(2+). K(+) is bound by residues threonine 248, isoleucine 250, and threonine 253. Threonine 254 contacts Mg(2+). Lysine 450 contacts (6S)-5-formyl-5,6,7,8-tetrahydrofolate.

This sequence belongs to the TRAFAC class TrmE-Era-EngA-EngB-Septin-like GTPase superfamily. TrmE GTPase family. Homodimer. Heterotetramer of two MnmE and two MnmG subunits. K(+) is required as a cofactor.

The protein resides in the cytoplasm. In terms of biological role, exhibits a very high intrinsic GTPase hydrolysis rate. Involved in the addition of a carboxymethylaminomethyl (cmnm) group at the wobble position (U34) of certain tRNAs, forming tRNA-cmnm(5)s(2)U34. The polypeptide is tRNA modification GTPase MnmE (Bordetella avium (strain 197N)).